The chain runs to 368 residues: Peptide chain release factor 2 (368 aa).

N5-methylglutamine is present on Q251.

The protein belongs to the prokaryotic/mitochondrial release factor family. In terms of processing, methylated by PrmC. Methylation increases the termination efficiency of RF2.

Its subcellular location is the cytoplasm. Functionally, peptide chain release factor 2 directs the termination of translation in response to the peptide chain termination codons UGA and UAA. The polypeptide is Peptide chain release factor 2 (Wolinella succinogenes (strain ATCC 29543 / DSM 1740 / CCUG 13145 / JCM 31913 / LMG 7466 / NCTC 11488 / FDC 602W) (Vibrio succinogenes)).